The primary structure comprises 89 residues: Small ribosomal subunit protein uS15 (89 aa).

Belongs to the universal ribosomal protein uS15 family. As to quaternary structure, part of the 30S ribosomal subunit. Forms a bridge to the 50S subunit in the 70S ribosome, contacting the 23S rRNA.

Its function is as follows. One of the primary rRNA binding proteins, it binds directly to 16S rRNA where it helps nucleate assembly of the platform of the 30S subunit by binding and bridging several RNA helices of the 16S rRNA. In terms of biological role, forms an intersubunit bridge (bridge B4) with the 23S rRNA of the 50S subunit in the ribosome. This is Small ribosomal subunit protein uS15 from Haemophilus influenzae (strain PittGG).